A 355-amino-acid polypeptide reads, in one-letter code: Guanine nucleotide-binding protein G(o) subunit alpha (355 aa).

Residues 1–17 (MGCASSAEERAAPSAQQ) are compositionally biased toward low complexity. The interval 1–24 (MGCASSAEERAAPSAQQADREKLK) is disordered. Glycine 2 carries N-myristoyl glycine lipidation. Cysteine 3 carries S-palmitoyl cysteine lipidation. Residues 32–355 (KDIKLLLLGA…ANNLRGCGLY (324 aa)) form the G-alpha domain. The interval 35 to 48 (KLLLLGAGESGKST) is G1 motif. GTP is bound by residues 40 to 47 (GAGESGKS), 176 to 182 (LRTRVKT), 201 to 205 (DVGRG), 201 to 206 (DVGRGQ), 271 to 274 (NKKD), and alanine 327. The Mg(2+) site is built by serine 47 and threonine 182. The G2 motif stretch occupies residues 174 to 182 (DILRTRVKT). Residues 197 to 206 (FKLFDVGRGQ) form a G3 motif region. The tract at residues 267-274 (ILFLNKKD) is G4 motif. The interval 326–330 (TATDT) is G5 motif.

This sequence belongs to the G-alpha family. G(i/o/t/z) subfamily. G proteins are composed of 3 units; alpha, beta and gamma. The alpha chain contains the guanine nucleotide binding site.

Guanine nucleotide-binding proteins (G proteins) are involved as modulators or transducers in various transmembrane signaling systems. The G(o) protein function is not clear. The protein is Guanine nucleotide-binding protein G(o) subunit alpha of Manduca sexta (Tobacco hawkmoth).